Consider the following 330-residue polypeptide: uncharacterized protein (330 aa).

The protein to H.influenzae HI_0461.

This is an uncharacterized protein from Escherichia coli (strain K12).